The primary structure comprises 715 residues: Putative pentatricopeptide repeat-containing protein At3g23330 (715 aa).

PPR repeat units follow at residues 38–68, 69–103, 104–138, 139–172, 206–240, 241–275, 276–306, 307–341, 342–376, 377–407, 408–442, 443–473, and 479–509; these read SHTSASIVISIYTNLKLLHEALLLFKTLKSP, PVLAWKSVIRCFTDQSLFSKALASFVEMRASGRCP, DHNVFPSVLKSCTMMMDLRFGESVHGFIVRLGMDC, DLYTGNALMNMYAKLLGMGSKISVGNVFDEMPQR, DVVSYNTIIAGYAQSGMYEDALRMVREMGTTDLKP, DSFTLSSVLPIFSEYVDVIKGKEIHGYVIRKGIDS, DVYIGSSLVDMYAKSARIEDSERVFSRLYCR, DGISWNSLVAGYVQNGRYNEALRLFRQMVTAKVKP, GAVAFSSVIPACAHLATLHLGKQLHGYVLRGGFGS, NIFIASALVDMYSKCGNIKAARKIFDRMNVL, DEVSWTAIIMGHALHGHGHEAVSLFEEMKRQGVKP, NQVAFVAVLTACSHVGLVDEAWGYFNSMTKV, and ELEHYAAVADLLGRAGKLEEAYNFISKMCVE. The segment at 514 to 589 is type E motif; sequence VWSTLLSSCS…KPACSWIEMK (76 aa). The type E(+) motif stretch occupies residues 590-620; the sequence is NKTHGFVSGDRSHPSMDKINEFLKAVMEQME. The segment at 621–715 is type DYW motif; that stretch reads KEGYVADTSG…RGNCSCGDYW (95 aa).

Belongs to the PPR family. PCMP-H subfamily.

This Arabidopsis thaliana (Mouse-ear cress) protein is Putative pentatricopeptide repeat-containing protein At3g23330 (PCMP-H32).